Consider the following 95-residue polypeptide: Fungal defensin plectasin (95 aa).

An N-terminal signal peptide occupies residues 1–23 (MQFTTILSIGITVFGLLNTGAFA). Residues 24-55 (APQPVPEAYAVSDPEAHPDDFAGMDANQLQKR) constitute a propeptide that is removed on maturation. Beta-D-GlcNAc-(1-&gt;4)-Mur2Ac(oyl-L-Ala-gamma-D-Glu-L-Lys-D-Ala-D-Ala)-di-trans,octa-cis-undecaprenyl diphosphate contacts are provided by phenylalanine 57, glycine 58, and cysteine 59. Cystine bridges form between cysteine 59/cysteine 85, cysteine 70/cysteine 92, and cysteine 74/cysteine 94. A binds to membrane interface region spans residues 61-64 (GPWD). Beta-D-GlcNAc-(1-&gt;4)-Mur2Ac(oyl-L-Ala-gamma-D-Glu-L-Lys-D-Ala-D-Ala)-di-trans,octa-cis-undecaprenyl diphosphate-binding residues include aspartate 67, histidine 73, tyrosine 84, alanine 86, glycine 88, cysteine 92, and lysine 93. The tract at residues 86–92 (AKGGFVC) is binds to membrane interface.

It belongs to the invertebrate defensin family. Type 2 subfamily.

Its subcellular location is the secreted. The protein localises to the host cell membrane. Its function is as follows. Antimicrobial peptide that potently acts against several species of Gram-positive bacteria. It selectively inhibits peptidoglycan biosynthesis through complex formation with the cell wall precursor lipid II (1:1 molar ratio) thus inhibiting cell wall synthesis. It does not disrupt cell membranes. Is especially active against numerous clinical isolates of S.pneumoniae, including all 90 different serotypes and isolates resistant to clinically used antibiotics. In vitro, shows considerable selectivity for bacteria over mammalian cells. The peptide synthesized in D-amino acids does not show antibacterial activity. In vitro, acts on voltage-gated potassium channels by moderately inhibiting mammalian Kv1.3/KCNA3 (IC(50)=2.8 uM), and moderately inhibiting others potassium channels. This is Fungal defensin plectasin (DEF) from Pseudoplectania nigrella (Ebony cup).